The primary structure comprises 715 residues: MSGSKKKKITKADRLKQILEEEEKRQKEEEEARVKYEKEEMERLEIQRIENEKLQKLEAKDLERRNEELEELYLLEACFPEAEKLKRDNRFLSQWKHYIECDGSPDPSIAQEINTFITLWKEETNETLEEVIEKSKLVLNLIEKLKLILLETPPYDLQGKNIIQYQESILELQELLHLKFNRATEILLRQASTLADLDSGNMEKVIQDENVTLYIWANLKKNPRHRSIRFSETQTGFEIPRILATSDIALRLLHTHYDHVTPLSPVLTPSQEHISIVTDFVKEEVKSVQTAVSKDLQEENKQENESNSVHEEETKAEGQGDVEEQMCPVQEEPEATKYEMEMKLLSETVSAAQELLLENASEKPYFLEENEVDLCQFTTLGGVYHLDILELPPQCKPMKGWMIVEILKEGLQKYTYPPETTEDLEAENVFPPIEVTLEVHENVIFFENPMVARWDAEGKQWKTDGISNVSYKSEERLITFNLETFCPVTLIQDAHINMPYQSWELRPLDVNKVLLTITTVFTELQIQIKENLCMLASIKVNNKNHSSILEEKWMTPVSFIIALKKAGLNIFPTGHSHLYVVINYKHPSVEVKAYRQMALLSSAFAFCWSKWNTACESKKTVFQVREHLLKEEPIRNPNWTLLMFSGDRAQSLKINESSDAFSEALKEETEFHSTLYHMVKDFASQEAMRAVRRSNCQFVDSVCHMLLSTRLLSYS.

Residues 291-322 (AVSKDLQEENKQENESNSVHEEETKAEGQGDV) form a disordered region. Positions 295 to 318 (DLQEENKQENESNSVHEEETKAEG) are enriched in basic and acidic residues.

This sequence belongs to the DNAI7 family. In terms of assembly, part of the multisubunit axonemal dynein complex formed at least of two heavy chains and a number of intermediate and light chains. Associates with tubulin. Interacts with microtubule. Ubiquitinated. Ubiquitination leads to its degradation through the 26S proteasome. Ubiquitin-proteasome-mediated DNAI7 degradation occurs in mitosis.

The protein resides in the cell projection. The protein localises to the cilium. It is found in the cytoplasm. In terms of biological role, via its association with the multisubunit axonemal dynein complex, is potentially involved in the regulation of cilia function. May act as a cell cycle regulator. This chain is Dynein axonemal intermediate chain 7, found in Bos taurus (Bovine).